The sequence spans 127 residues: Translation initiation factor 5A (127 aa).

Residue Lys35 is modified to Hypusine.

This sequence belongs to the eIF-5A family.

It is found in the cytoplasm. Its function is as follows. Functions by promoting the formation of the first peptide bond. The polypeptide is Translation initiation factor 5A (Methanococcoides burtonii (strain DSM 6242 / NBRC 107633 / OCM 468 / ACE-M)).